Reading from the N-terminus, the 76-residue chain is UPF0291 protein Aflv_1503 (76 aa).

The tract at residues 56–76 (DPNGNDVTPQKLKDSKKKRLH) is disordered.

This sequence belongs to the UPF0291 family.

The protein resides in the cytoplasm. In Anoxybacillus flavithermus (strain DSM 21510 / WK1), this protein is UPF0291 protein Aflv_1503.